The following is a 568-amino-acid chain: Hemagglutinin-neuraminidase (568 aa).

Residues 1–18 (MSGAEGNTNKRTFRAVFR) lie on the Intravirion side of the membrane. Residues 19 to 39 (TLIILITLTILALSAAILYEV) form a helical membrane-spanning segment. At 40-568 (THTSNGSESN…VPFLREVIIT (529 aa)) the chain is on the virion surface side. Residues asparagine 44 and asparagine 111 are each glycosylated (N-linked (GlcNAc...) asparagine; by host). 3 disulfide bridges follow: cysteine 162/cysteine 186, cysteine 176/cysteine 237, and cysteine 228/cysteine 241. The involved in neuraminidase activity stretch occupies residues 224–229 (NRKSCS). 2 N-linked (GlcNAc...) asparagine; by host glycosylation sites follow: asparagine 268 and asparagine 280. 3 disulfide bridges follow: cysteine 334-cysteine 455, cysteine 366-cysteine 376, and cysteine 449-cysteine 459. An N-linked (GlcNAc...) asparagine; by host glycan is attached at asparagine 382. Asparagine 513 carries N-linked (GlcNAc...) asparagine; by host glycosylation. Cysteine 531 and cysteine 542 are oxidised to a cystine.

It belongs to the paramyxoviruses hemagglutinin-neuraminidase family. Homotetramer; composed of disulfide-linked homodimers.

Its subcellular location is the virion membrane. It is found in the host cell membrane. The catalysed reaction is Hydrolysis of alpha-(2-&gt;3)-, alpha-(2-&gt;6)-, alpha-(2-&gt;8)- glycosidic linkages of terminal sialic acid residues in oligosaccharides, glycoproteins, glycolipids, colominic acid and synthetic substrates.. Its function is as follows. Attaches the virus to sialic acid-containing cell receptors and thereby initiating infection. Binding of HN protein to the receptor induces a conformational change that allows the F protein to trigger virion/cell membranes fusion. Functionally, neuraminidase activity ensures the efficient spread of the virus by dissociating the mature virions from the neuraminic acid containing glycoproteins. This chain is Hemagglutinin-neuraminidase (HN), found in Simiiformes (SV41).